The primary structure comprises 319 residues: MVHHKVTIIGSGPAAHTAAIYLARAEIKPTLYEGMFANGVAAGGQLTTTTEIENFPGFPDGLTGSDLMERMKAQSVKFGTEVVTETVAKVDLSARPFKLWTEFNEDEEPTTTDAIILATGASAKRLGLPGEETYWQRGISACAVCDGAVPIFRNKPLAVVGGGDSACEEASFLTKYGSKVFMLVRKDHMRASTIMQRRVERNEKIEVLYNTAPVEAKGDGSLLDALRVRDTRTGEESDLPVNGLFYAIGHTPATQLVAGQVDLDESGYVKTVPGSTLTNVPGLFAAGDVQDSRYRQAVTSAGSGCMAALDAEKFLSELE.

Residues Ser11–Ala14, Val40–Ala41, Gln45, Asn54, Val87, Cys145, Asp288, and Arg295–Ala297 contribute to the FAD site. Cys142 and Cys145 are joined by a disulfide.

The protein belongs to the class-II pyridine nucleotide-disulfide oxidoreductase family. As to quaternary structure, homodimer. Requires FAD as cofactor.

The protein localises to the cytoplasm. It catalyses the reaction [thioredoxin]-dithiol + NADP(+) = [thioredoxin]-disulfide + NADPH + H(+). The chain is Thioredoxin reductase (TRR1) from Eremothecium gossypii (strain ATCC 10895 / CBS 109.51 / FGSC 9923 / NRRL Y-1056) (Yeast).